The sequence spans 313 residues: Protein FixB (313 aa).

Residue 255-283 participates in FAD binding; sequence LYLAVGISGQIQHMVGANASQTIFAINKD.

Belongs to the ETF alpha-subunit/FixB family. In terms of assembly, heterodimer of FixA and FixB.

It participates in amine and polyamine metabolism; carnitine metabolism. Functionally, required for anaerobic carnitine reduction. May bring reductant to CaiA. The polypeptide is Protein FixB (Escherichia coli O6:K15:H31 (strain 536 / UPEC)).